Consider the following 224-residue polypeptide: A-factor barrier protein 1 (224 aa).

Residues 1-25 (MIFAPSFSLIKNILLVSFLISHSFA) form the signal peptide. Asparagine 148, asparagine 181, and asparagine 191 each carry an N-linked (GlcNAc...) asparagine glycan. A lipid anchor (GPI-anchor amidated asparagine) is attached at asparagine 203. A propeptide spans 204-224 (GAHAKSLYFPMALFGIFAVAL) (removed in mature form).

This sequence belongs to the SRP1/TIP1 family. Post-translationally, the GPI-anchor is attached to the protein in the endoplasmic reticulum and serves to target the protein to the cell surface. There, the glucosamine-inositol phospholipid moiety is cleaved off and the GPI-modified mannoprotein is covalently attached via its lipidless GPI glycan remnant to the 1,6-beta-glucan of the outer cell wall layer.

It localises to the secreted. It is found in the cell wall. The protein resides in the membrane. Its function is as follows. MATalpha-specific protein that interferes with a-factor, the pheromone secreted by MATa cells. Contributes to mating efficiency. Acts to bind and sequester a-factor rather than to degrade it, and promotes the efficient mating of MATalpha cells by keeping the a-factor concentration at the plasma membrane within the narrow range needed for accurate pheromone gradient detection. The chain is A-factor barrier protein 1 from Saccharomyces cerevisiae (strain ATCC 204508 / S288c) (Baker's yeast).